We begin with the raw amino-acid sequence, 332 residues long: Abl interactor homolog (332 aa).

Positions H73–D104 form a coiled coil. Residues S152 to M332 form a disordered region. Over residues N164–G206 the composition is skewed to low complexity. Positions A221–S247 are enriched in pro residues. The segment covering Q248–A257 has biased composition (polar residues). The span at L277–R314 shows a compositional bias: pro residues.

This sequence belongs to the ABI family. In terms of assembly, part of a Scar/WAVE complex containing brk1, scrA, abiA, pirA and napA. Interacts with scrA.

Involved in regulation of actin and microtubule organization. Required for proper cytokinesis. This is Abl interactor homolog (abiA) from Dictyostelium discoideum (Social amoeba).